Consider the following 360-residue polypeptide: Neutral protease 2 homolog SS1G_13741 (360 aa).

N-linked (GlcNAc...) asparagine glycosylation occurs at asparagine 129. Intrachain disulfides connect cysteine 189–cysteine 261 and cysteine 268–cysteine 286. Histidine 311 is a binding site for Zn(2+). Glutamate 312 is a catalytic residue. 2 residues coordinate Zn(2+): histidine 315 and aspartate 326.

This sequence belongs to the peptidase M35 family. Zn(2+) is required as a cofactor.

It localises to the secreted. It carries out the reaction Preferential cleavage of bonds with hydrophobic residues in P1'. Also 3-Asn-|-Gln-4 and 8-Gly-|-Ser-9 bonds in insulin B chain.. Functionally, secreted metalloproteinase that allows assimilation of proteinaceous substrates. Shows high activities on basic nuclear substrates such as histone and protamine. In Sclerotinia sclerotiorum (strain ATCC 18683 / 1980 / Ss-1) (White mold), this protein is Neutral protease 2 homolog SS1G_13741.